Here is a 714-residue protein sequence, read N- to C-terminus: ABC transporter B family member 28 (714 aa).

5 helical membrane passes run 109–129, 161–181, 240–260, 340–360, and 361–381; these read LSVC…MPVF, IFTI…MAIL, ICIL…LMLA, VAVY…VKTG, and ELAV…TFAV. An ABC transmembrane type-1 domain is found at 109-393; the sequence is LSVCLLTLLG…LVNTFGDLRG (285 aa). The region spanning 470–708 is the ABC transporter domain; it reads VCLDDVHFAY…KGSYASLVGT (239 aa). 505 to 512 contributes to the ATP binding site; that stretch reads GSSGAGKS.

It belongs to the ABC transporter superfamily. ABCB family. Multidrug resistance exporter (TC 3.A.1.201) subfamily.

The protein localises to the membrane. The sequence is that of ABC transporter B family member 28 (ABCB28) from Arabidopsis thaliana (Mouse-ear cress).